The following is a 144-amino-acid chain: Putative pre-16S rRNA nuclease (144 aa).

This sequence belongs to the YqgF nuclease family.

The protein resides in the cytoplasm. Its function is as follows. Could be a nuclease involved in processing of the 5'-end of pre-16S rRNA. The chain is Putative pre-16S rRNA nuclease from Ralstonia nicotianae (strain ATCC BAA-1114 / GMI1000) (Ralstonia solanacearum).